A 606-amino-acid polypeptide reads, in one-letter code: MSDTSESGAGLTRFQAEASEKDSSSMMQTLLTVTQNVEVPETLKASKALEVSEDVKVSKASGVSKATEVSKTPEAQEAPATQASSTTQLTDTQVLATENKSVAADTKKQNADPQAVTMPATETKKVSHVADTKVNTKAQETEAAPSQASADEPEPESAAAQSQENQDTRPKVKAKKARKVKHLDGEEDGSSDQSQASGTTGGRRVSKALMASMARRASRGPIAFWARRASRTRLAAWARRALLSLRSPKARRGKARRRAAKLQSSQEPEAPPPRDVALLQGRANDLVKYLLAKDQTKIPIKRSDMLKDIIKEYTDVYPEIIERAGYSLEKVFGIQLKEIDKNDHLYILLSTLEPTDAGILGTTKDSPKLGLLMVLLSIIFMNGNRSSEAVIWEVLRKLGLRPGIHHSLFGDVKKLITDEFVKQKYLDYARVPNSNPPEYEFFWGLRSYYETSKMKVLKFACKVQKKDPKEWAAQYREAMEADLKAAAEAAAEAKARAEIRARMGIGLGSENAAGPCNWDEADIGPWAKARIQAGAEAKAKAQESGSASTGASTSTNNSASASASTSGGFSAGASLTATLTFGLFAGLGGAGASTSGSSGACGFSYK.

2 disordered regions span residues 1 to 29 and 52 to 204; these read MSDTSESGAGLTRFQAEASEKDSSSMMQT and SEDV…GGRR. The residue at position 2 (Ser-2) is an N-acetylserine. Position 5 is a phosphoserine (Ser-5). Thr-72 carries the phosphothreonine modification. Residues 79 to 100 are compositionally biased toward polar residues; it reads PATQASSTTQLTDTQVLATENK. A compositionally biased stretch (basic and acidic residues) spans 122–131; that stretch reads ETKKVSHVAD. Over residues 142-164 the composition is skewed to low complexity; that stretch reads EAAPSQASADEPEPESAAAQSQE. At Ser-157 the chain carries Phosphoserine. A compositionally biased stretch (basic residues) spans 171-181; sequence KVKAKKARKVK. Phosphoserine occurs at positions 190, 191, 194, 197, 244, and 247. Residues 248 to 260 are compositionally biased toward basic residues; the sequence is PKARRGKARRRAA. The tract at residues 248 to 275 is disordered; sequence PKARRGKARRRAAKLQSSQEPEAPPPRD. A phosphoserine mark is found at Ser-264 and Ser-265. One can recognise an MAGE domain in the interval 279-478; the sequence is LQGRANDLVK…KEWAAQYREA (200 aa). The tract at residues 534–563 is disordered; sequence GAEAKAKAQESGSASTGASTSTNNSASASA.

In terms of assembly, interacts with GNAS.

Regulates the expression, localization to the plasma membrane and function of the sodium chloride cotransporters SLC12A1 and SLC12A3, two key components of salt reabsorption in the distal renal tubule. The sequence is that of Melanoma-associated antigen D2 (MAGED2) from Pongo abelii (Sumatran orangutan).